The following is a 105-amino-acid chain: Large ribosomal subunit protein eL33 (105 aa).

Belongs to the eukaryotic ribosomal protein eL33 family.

The protein was found to bind to both initiator and elongator tRNAs and consequently was assigned to the P site or P and A site. The polypeptide is Large ribosomal subunit protein eL33 (rpl35a) (Dictyostelium discoideum (Social amoeba)).